Here is an 80-residue protein sequence, read N- to C-terminus: Exodeoxyribonuclease 7 small subunit (80 aa).

The protein belongs to the XseB family. As to quaternary structure, heterooligomer composed of large and small subunits.

The protein localises to the cytoplasm. The catalysed reaction is Exonucleolytic cleavage in either 5'- to 3'- or 3'- to 5'-direction to yield nucleoside 5'-phosphates.. Functionally, bidirectionally degrades single-stranded DNA into large acid-insoluble oligonucleotides, which are then degraded further into small acid-soluble oligonucleotides. This Marinomonas sp. (strain MWYL1) protein is Exodeoxyribonuclease 7 small subunit.